Reading from the N-terminus, the 344-residue chain is KRR1 small subunit processome component homolog (344 aa).

The region spanning 126 to 194 (DIIKIGNLVH…VRDIVLDTMN (69 aa)) is the KH domain. A compositionally biased stretch (basic residues) spans 230-246 (KNKNISKRKQPKNKKPK). The disordered stretch occupies residues 230-326 (KNKNISKRKQ…KRAAEDNKVD (97 aa)). Positions 271–344 (FLNKEQKQAK…MKANKKKERS (74 aa)) form a coiled coil. Residues 272–303 (LNKEQKQAKRQQERTAKQAEAAKKQDERRNKD) are compositionally biased toward basic and acidic residues.

This sequence belongs to the KRR1 family. Monomer. Component of the ribosomal small subunit (SSU) processome.

It localises to the nucleus. Its subcellular location is the nucleolus. Its function is as follows. Required for 40S ribosome biogenesis. Involved in nucleolar processing of pre-18S ribosomal RNA and ribosome assembly. Binds to RNA. Required for female germline development, cell viability during eye development and for survival of dividing cells and epithelial cells during early wing disk development. The protein is KRR1 small subunit processome component homolog of Drosophila mojavensis (Fruit fly).